Here is a 314-residue protein sequence, read N- to C-terminus: Olfactory receptor 5P81 (314 aa).

The Extracellular segment spans residues 1–28; the sequence is MAFLEDGNHTVVTEFILLGLTDDPVLRV. Residue asparagine 8 is glycosylated (N-linked (GlcNAc...) asparagine). A helical membrane pass occupies residues 29 to 49; that stretch reads ILFIIILCIYLVTVSGNLSTI. The Cytoplasmic segment spans residues 50 to 57; that stretch reads LLIRVSSQ. Residues 58 to 78 form a helical membrane-spanning segment; that stretch reads LHHPMYFFLSHLASIDIAISS. Over 79–102 the chain is Extracellular; that stretch reads SVTPNMVVNFLVERSSISYIGCGI. An intrachain disulfide couples cysteine 100 to cysteine 192. Residues 103 to 123 traverse the membrane as a helical segment; sequence QLGSAVFFGAIECFLLAVMAY. Residues 124-136 lie on the Cytoplasmic side of the membrane; that stretch reads DRFVAICNPLLYS. A helical membrane pass occupies residues 137-157; the sequence is TKMSKQVCIQLLVGSYIGGFI. Topologically, residues 158–199 are extracellular; sequence HASFFTLSFVSFLFCGPNRINHFFCDFTPLVELSCSDNSVLI. Residues 200-220 traverse the membrane as a helical segment; the sequence is ILDSFSTGTIIVITVFVIAIS. Topologically, residues 221-240 are cytoplasmic; the sequence is YTCILITILKMHSTEGRHKA. A helical transmembrane segment spans residues 241 to 261; it reads FSTCTSHLTVVTLLYGTVTFI. Over 262-274 the chain is Extracellular; the sequence is YVMPKSSYSTDQN. A helical transmembrane segment spans residues 275-295; sequence KVISVFYMVVIPMLNPIIYSL. Over 296-314 the chain is Cytoplasmic; the sequence is RNNEIKGALKKQLGEKNIF.

Belongs to the G-protein coupled receptor 1 family.

The protein resides in the cell membrane. Its function is as follows. Potential odorant receptor. The polypeptide is Olfactory receptor 5P81 (Mus musculus (Mouse)).